The chain runs to 151 residues: 3-dehydroquinate dehydratase (151 aa).

The active-site Proton acceptor is the tyrosine 24. Substrate-binding residues include asparagine 76, histidine 82, and aspartate 89. Residue histidine 102 is the Proton donor of the active site. Residues 103 to 104 (VS) and arginine 113 contribute to the substrate site.

This sequence belongs to the type-II 3-dehydroquinase family. As to quaternary structure, homododecamer.

The catalysed reaction is 3-dehydroquinate = 3-dehydroshikimate + H2O. The protein operates within metabolic intermediate biosynthesis; chorismate biosynthesis; chorismate from D-erythrose 4-phosphate and phosphoenolpyruvate: step 3/7. Catalyzes a trans-dehydration via an enolate intermediate. The polypeptide is 3-dehydroquinate dehydratase (Rhodopseudomonas palustris (strain TIE-1)).